The following is a 155-amino-acid chain: Protein phosphatase 1 regulatory subunit 17 (155 aa).

The interval 41 to 73 is disordered; it reads KKKPRKGKNVQATLNVESDQKKPRRKDTPALHI. Positions 58-69 are enriched in basic and acidic residues; that stretch reads SDQKKPRRKDTP. Phosphothreonine; by PKG/PRKG1 is present on residues T68 and T119.

Post-translationally, substrate for cGMP-dependent protein kinase. Phosphorylated by PRKG1 isoform alpha. Phosphorylation of Thr-68 and Thr-119 is required for its phosphatase activity. Substrate for cGMP-dependent protein kinase. In terms of tissue distribution, highly expressed in cerebellum.

Inhibits phosphatase activities of protein phosphatase 1 (PP1) and protein phosphatase 2A (PP2A) complexes. In Homo sapiens (Human), this protein is Protein phosphatase 1 regulatory subunit 17 (PPP1R17).